Consider the following 528-residue polypeptide: Extracellular serine/threonine protein CG31145 (528 aa).

Topologically, residues 1 to 12 (MAVLRTMKLKER) are cytoplasmic. The propeptide occupies 1-76 (MAVLRTMKLK…LHEFKRKFLQ (76 aa)). The helical transmembrane segment at 13-33 (LVISLGATLVLLTLLLIVDVQ) threads the bilayer. Topologically, residues 34–528 (MDFGVANRHL…VDGSETDVSS (495 aa)) are lumenal. The segment at 77-130 (KSNASGSKEASTQAGASQSGGATSGQDAAAGASGGAAGPGTSRSTSTRKPTPHD) is disordered. Residue N79 is glycosylated (N-linked (GlcNAc...) asparagine). Low complexity predominate over residues 86–107 (ASTQAGASQSGGATSGQDAAAG). The N-linked (GlcNAc...) asparagine glycan is linked to N173. Positions 220, 236, and 257 each coordinate ATP. E257 serves as a coordination point for Mn(2+). Residue N286 is glycosylated (N-linked (GlcNAc...) asparagine). 2 disulfides stabilise this stretch: C312-C328 and C317-C321. Residue 339–342 (AAFL) coordinates ATP. Cystine bridges form between C376–C450 and C451–C510. D408 is an active-site residue. Position 413 (E413) interacts with ATP. The N-linked (GlcNAc...) asparagine glycan is linked to N420. D428 contacts ATP. D428 is a binding site for Mn(2+).

Belongs to the FAM20 family. Mn(2+) serves as cofactor. As to expression, in embryos, prominently expressed in midline glia, salivary gland, intestine and dorsal vessel (heart). Not associated with biomineralization.

The protein localises to the golgi apparatus membrane. It localises to the secreted. It catalyses the reaction L-seryl-[protein] + ATP = O-phospho-L-seryl-[protein] + ADP + H(+). The catalysed reaction is L-threonyl-[protein] + ATP = O-phospho-L-threonyl-[protein] + ADP + H(+). Golgi serine/threonine protein kinase that phosphorylates secretory pathway proteins within Ser-x-Glu/pSer motifs. The polypeptide is Extracellular serine/threonine protein CG31145 (Drosophila melanogaster (Fruit fly)).